Reading from the N-terminus, the 71-residue chain is Light-harvesting protein B-800/850 alpha chain (71 aa).

Topologically, residues 1–15 (MNQGKVWRVVKPTVG) are cytoplasmic. Residues 16-36 (VPVYLGAVAVTALILHGGLLA) form a helical membrane-spanning segment. Residue His31 participates in a bacteriochlorophyll binding. At 37–50 (KTDWFGAYWNGGKK) the chain is on the periplasmic side. The chain crosses the membrane as a helical span at residues 51–71 (AAAAAAAVAPAPVAAPQAPAQ).

The protein belongs to the antenna complex alpha subunit family. An alpha/beta heterodimer conjugated to 3 bacteriochlorophyll molecules. The core complex is formed by different alpha and beta chains, binding bacteriochlorophyll molecules, and arranged most probably in tetrameric structures disposed around the reaction center. The non-pigmented gamma chains may constitute additional components.

It is found in the cell membrane. Functionally, antenna complexes are light-harvesting systems, which transfer the excitation energy to the reaction centers. This Rubrivivax gelatinosus (Rhodocyclus gelatinosus) protein is Light-harvesting protein B-800/850 alpha chain (pucA).